Reading from the N-terminus, the 537-residue chain is Tyrosine-protein kinase Fyn (537 aa).

A lipid anchor (N-myristoyl glycine) is attached at Gly-2. S-palmitoyl cysteine attachment occurs at residues Cys-3 and Cys-6. The disordered stretch occupies residues 14–35 (LTEERDGSLNQSSGYRYGTDPT). 2 positions are modified to phosphoserine: Ser-21 and Ser-26. The 62-residue stretch at 82–143 (TGVTLFVALY…PSNYVAPVDS (62 aa)) folds into the SH3 domain. Residues 149-246 (WYFGKLGRKD…GLCCRLVVPC (98 aa)) enclose the SH2 domain. Phosphotyrosine is present on Tyr-185. The region spanning 271 to 524 (LQLIKRLGNG…YLQGFLEDYF (254 aa)) is the Protein kinase domain. Residues 277–285 (LGNGQFGEV) and Lys-299 contribute to the ATP site. Catalysis depends on Asp-390, which acts as the Proton acceptor. Tyr-420 bears the Phosphotyrosine; by autocatalysis mark. Tyr-531 carries the phosphotyrosine modification.

This sequence belongs to the protein kinase superfamily. Tyr protein kinase family. SRC subfamily. As to quaternary structure, interacts (via its SH3 domain) with PIK3R1 and PRMT8. Interacts with FYB1, PAG1, and SH2D1A. Interacts with CD79A (tyrosine-phosphorylated form); the interaction increases FYN activity. Interacts (via SH2 domain) with CSF1R (tyrosine phosphorylated). Interacts with TOM1L1 (phosphorylated form). Interacts with KDR (tyrosine phosphorylated). Interacts (via SH3 domain) with KLHL2 (via N-terminus). Interacts with SH2D1A and SLAMF1. Interacts with ITCH; the interaction phosphorylates ITCH and negatively regulates its activity. Interacts with FASLG. Interacts with RUNX3. Interacts with KIT. Interacts with EPHA8; possible downstream effector of EPHA8 in regulation of cell adhesion. Interacts with PTK2/FAK1; this interaction leads to PTK2/FAK1 phosphorylation and activation. Interacts with CAV1; this interaction couples integrins to the Ras-ERK pathway. Interacts with UNC119. Interacts (via SH2 domain) with PTPRH (phosphorylated form). Interacts with PTPRO (phosphorylated form). Interacts with PTPRB (phosphorylated form). Interacts with FYB2. Interacts with DSCAM. Interacts with SKAP1 and FYB1; this interaction promotes the phosphorylation of CLNK. Interacts with NEDD9; in the presence of PTK2. Mn(2+) is required as a cofactor. Autophosphorylated at Tyr-420. Phosphorylation on the C-terminal tail at Tyr-531 by CSK maintains the enzyme in an inactive state. PTPRC/CD45 dephosphorylates Tyr-531 leading to activation. Dephosphorylation at Tyr-420 by PTPN2 negatively regulates T-cell receptor signaling. Phosphorylated at tyrosine residues, which can be enhanced by NTN1. In terms of processing, palmitoylated. Palmitoylation at Cys-3 and Cys-6, probably by ZDHHC21, regulates subcellular location. In terms of tissue distribution, detected in spinal cord oligodendrocytes (at protein level).

It is found in the cytoplasm. Its subcellular location is the nucleus. It localises to the cell membrane. The protein localises to the perikaryon. The enzyme catalyses L-tyrosyl-[protein] + ATP = O-phospho-L-tyrosyl-[protein] + ADP + H(+). Inhibited by phosphorylation of Tyr-531 by leukocyte common antigen and activated by dephosphorylation of this site. Non-receptor tyrosine-protein kinase that plays a role in many biological processes including regulation of cell growth and survival, cell adhesion, integrin-mediated signaling, cytoskeletal remodeling, cell motility, immune response and axon guidance. Inactive FYN is phosphorylated on its C-terminal tail within the catalytic domain. Following activation by PKA, the protein subsequently associates with PTK2/FAK1, allowing PTK2/FAK1 phosphorylation, activation and targeting to focal adhesions. Involved in the regulation of cell adhesion and motility through phosphorylation of CTNNB1 (beta-catenin) and CTNND1 (delta-catenin). Regulates cytoskeletal remodeling by phosphorylating several proteins including the actin regulator WAS and the microtubule-associated proteins MAP2 and MAPT. Promotes cell survival by phosphorylating AGAP2/PIKE-A and preventing its apoptotic cleavage. Participates in signal transduction pathways that regulate the integrity of the glomerular slit diaphragm (an essential part of the glomerular filter of the kidney) by phosphorylating several slit diaphragm components including NPHS1, KIRREL1 and TRPC6. Plays a role in neural processes by phosphorylating DPYSL2, a multifunctional adapter protein within the central nervous system, ARHGAP32, a regulator for Rho family GTPases implicated in various neural functions, and SNCA, a small pre-synaptic protein. Involved in reelin signaling by mediating phosphorylation of DAB1 following reelin (RELN)-binding to its receptor. Participates in the downstream signaling pathways that lead to T-cell differentiation and proliferation following T-cell receptor (TCR) stimulation. Phosphorylates PTK2B/PYK2 in response to T-cell receptor activation. Also participates in negative feedback regulation of TCR signaling through phosphorylation of PAG1, thereby promoting interaction between PAG1 and CSK and recruitment of CSK to lipid rafts. CSK maintains LCK and FYN in an inactive form. Promotes CD28-induced phosphorylation of VAV1. In mast cells, phosphorylates CLNK after activation of immunoglobulin epsilon receptor signaling. Can also promote CD244-mediated NK cell activation. The sequence is that of Tyrosine-protein kinase Fyn from Rattus norvegicus (Rat).